Here is a 127-residue protein sequence, read N- to C-terminus: Glycine cleavage system H protein (127 aa).

Residues 22–104 (EVVIGITHFA…YEGAWMVKVE (83 aa)) form the Lipoyl-binding domain. At Lys-63 the chain carries N6-lipoyllysine.

Belongs to the GcvH family. In terms of assembly, the glycine cleavage system is composed of four proteins: P, T, L and H. Requires (R)-lipoate as cofactor.

The glycine cleavage system catalyzes the degradation of glycine. The H protein shuttles the methylamine group of glycine from the P protein to the T protein. Functionally, is also involved in protein lipoylation via its role as an octanoyl/lipoyl carrier protein intermediate. The protein is Glycine cleavage system H protein of Bacillus cereus (strain B4264).